The sequence spans 216 residues: Pyridoxine/pyridoxamine 5'-phosphate oxidase (216 aa).

FMN-binding positions include 63 to 68 (RMVLMK), 78 to 79 (YS), K85, and Q107. K68 provides a ligand contact to substrate. Substrate is bound by residues Y125 and R129. Residues 142-143 (QS) and W187 contribute to the FMN site. Position 193 to 195 (193 to 195 (RLH)) interacts with substrate. R197 contacts FMN.

This sequence belongs to the pyridoxamine 5'-phosphate oxidase family. As to quaternary structure, homodimer. FMN is required as a cofactor.

It carries out the reaction pyridoxamine 5'-phosphate + O2 + H2O = pyridoxal 5'-phosphate + H2O2 + NH4(+). The enzyme catalyses pyridoxine 5'-phosphate + O2 = pyridoxal 5'-phosphate + H2O2. It functions in the pathway cofactor metabolism; pyridoxal 5'-phosphate salvage; pyridoxal 5'-phosphate from pyridoxamine 5'-phosphate: step 1/1. Its pathway is cofactor metabolism; pyridoxal 5'-phosphate salvage; pyridoxal 5'-phosphate from pyridoxine 5'-phosphate: step 1/1. In terms of biological role, catalyzes the oxidation of either pyridoxine 5'-phosphate (PNP) or pyridoxamine 5'-phosphate (PMP) into pyridoxal 5'-phosphate (PLP). This chain is Pyridoxine/pyridoxamine 5'-phosphate oxidase, found in Bradyrhizobium sp. (strain BTAi1 / ATCC BAA-1182).